We begin with the raw amino-acid sequence, 143 residues long: Lysozyme C (143 aa).

The N-terminal stretch at 1-15 is a signal peptide; it reads MKIPVFLLLLALANA. One can recognise a C-type lysozyme domain in the interval 16 to 143; the sequence is KVFQRCEWAR…LSAYIAGCGL (128 aa). 4 disulfide bridges follow: cysteine 21/cysteine 141, cysteine 45/cysteine 129, cysteine 79/cysteine 94, and cysteine 90/cysteine 108. Active-site residues include glutamate 50 and aspartate 67.

The protein belongs to the glycosyl hydrolase 22 family. In terms of assembly, monomer.

Its subcellular location is the secreted. It carries out the reaction Hydrolysis of (1-&gt;4)-beta-linkages between N-acetylmuramic acid and N-acetyl-D-glucosamine residues in a peptidoglycan and between N-acetyl-D-glucosamine residues in chitodextrins.. In terms of biological role, lysozymes have primarily a bacteriolytic function; those in tissues and body fluids are associated with the monocyte-macrophage system and enhance the activity of immunoagents. The sequence is that of Lysozyme C from Takifugu rubripes (Japanese pufferfish).